The following is a 510-amino-acid chain: MTEDKVTGTLVLAVFTAVLSSFQFGYDIGVINAPQQVIITHYRHVLGVSLDDRIAINNYALNSTEELPTSLGDPTPVSWAEEETMTSASLITMFWSLSVSSFAVGGMIASFFGGLLGDKLGRIKALLVANILSLVGALLMGFSKLGPSHILIISGRGISGLYCGLISGLIPMYIGEIAPTTLRGAIGALHQLAIVTGILISQIVGLDFILGNHELWHILLGLSAVPAILQCLLLFFCPESPRYLYIKLDEEAKAKKSLKRLRGSDDITKDITEMRKEREEASNEKKVSIIQLFTNASYRQPILVALMLHAAQQFSGINGIFYYSTSIFQTAGISQPVYATIGVGAVNTVFTAVSVFLVEKAGRRSLFLIGMSGMFVCAIFMSVGLVLLSKFPWMNYVSMTAIFLFVSFFEIGPGPIPWFMVAEFFSQGPRPAALAIAAFSNWTGNFIIALCFQYIADFCGPYVFFLLLVWSWPLFCSHFLKFQKPKENPLRKSQQSSERRGVQLKRQKLL.

Residues 1-10 (MTEDKVTGTL) lie on the Cytoplasmic side of the membrane. A helical transmembrane segment spans residues 11-31 (VLAVFTAVLSSFQFGYDIGVI). The Extracellular portion of the chain corresponds to 32–96 (NAPQQVIITH…SASLITMFWS (65 aa)). N62 is a glycosylation site (N-linked (GlcNAc...) asparagine). The chain crosses the membrane as a helical span at residues 97 to 117 (LSVSSFAVGGMIASFFGGLLG). Topologically, residues 118-122 (DKLGR) are cytoplasmic. The chain crosses the membrane as a helical span at residues 123–143 (IKALLVANILSLVGALLMGFS). Over 144 to 157 (KLGPSHILIISGRG) the chain is Extracellular. The chain crosses the membrane as a helical span at residues 158-178 (ISGLYCGLISGLIPMYIGEIA). The Cytoplasmic segment spans residues 179-191 (PTTLRGAIGALHQ). Residue Q191 participates in D-glucose binding. The helical transmembrane segment at 192-212 (LAIVTGILISQIVGLDFILGN) threads the bilayer. Over 213-215 (HEL) the chain is Extracellular. A helical membrane pass occupies residues 216–236 (WHILLGLSAVPAILQCLLLFF). The Cytoplasmic segment spans residues 237 to 301 (CPESPRYLYI…LFTNASYRQP (65 aa)). The chain crosses the membrane as a helical span at residues 302-322 (ILVALMLHAAQQFSGINGIFY). D-glucose contacts are provided by residues 312–313 (QQ) and N318. Residues 323–336 (YSTSIFQTAGISQP) lie on the Extracellular side of the membrane. A helical transmembrane segment spans residues 337–357 (VYATIGVGAVNTVFTAVSVFL). N347 contributes to the D-glucose binding site. Residues 358–365 (VEKAGRRS) are Cytoplasmic-facing. A helical transmembrane segment spans residues 366-386 (LFLIGMSGMFVCAIFMSVGLV). The Extracellular portion of the chain corresponds to 387–400 (LLSKFPWMNYVSMT). The helical transmembrane segment at 401-421 (AIFLFVSFFEIGPGPIPWFMV) threads the bilayer. D-glucose is bound by residues E410 and W418. Over 422-431 (AEFFSQGPRP) the chain is Cytoplasmic. The helical transmembrane segment at 432-452 (AALAIAAFSNWTGNFIIALCF) threads the bilayer. Residues 453–454 (QY) lie on the Extracellular side of the membrane. Residues 455–475 (IADFCGPYVFFLLLVWSWPLF) form a helical membrane-spanning segment. Residues 476–510 (CSHFLKFQKPKENPLRKSQQSSERRGVQLKRQKLL) are Cytoplasmic-facing. The tract at residues 490–510 (LRKSQQSSERRGVQLKRQKLL) is disordered.

The protein belongs to the major facilitator superfamily. Sugar transporter (TC 2.A.1.1) family. Glucose transporter subfamily. Post-translationally, N-glycosylated; required for stability and retention at the cell surface of pancreatic beta cells.

The protein localises to the cell membrane. It catalyses the reaction D-glucose(out) = D-glucose(in). The catalysed reaction is D-fructose(out) = D-fructose(in). It carries out the reaction L-dehydroascorbate(out) = L-dehydroascorbate(in). The enzyme catalyses D-galactose(in) = D-galactose(out). Its activity is regulated as follows. D-glucose and maltose competitively inhibit fructose transport. D-glucose, D-fructose and maltose inhibit deoxyglucose transport. Functionally, facilitative hexose transporter that mediates the transport of glucose, fructose and galactose. Likely mediates the bidirectional transfer of glucose across the plasma membrane of hepatocytes and is responsible for uptake of glucose by the beta cells; may comprise part of the glucose-sensing mechanism of the beta cell. May also participate with the Na(+)/glucose cotransporter in the transcellular transport of glucose in the small intestine and kidney. Also able to mediate the transport of dehydroascorbate. This is Solute carrier family 2, facilitated glucose transporter member 2 from Bos taurus (Bovine).